We begin with the raw amino-acid sequence, 443 residues long: Glycerol-3-phosphate acyltransferase 3-like (443 aa).

The next 3 membrane-spanning stretches (helical) occupy residues 15 to 35 (WFSCVIVLIMLPAMFGISLGI), 146 to 166 (ISLRLTVLWVVGVVVRYCILL), and 170 to 190 (ITLTTIGLTWLVIGTTTVGFL). An HXXXXD motif motif is present at residues 238–243 (HTSPID). The chain crosses the membrane as a helical span at residues 358-378 (IMSYLLRMMTSWAIVCNVWYL).

Belongs to the 1-acyl-sn-glycerol-3-phosphate acyltransferase family.

The protein localises to the endoplasmic reticulum membrane. It catalyses the reaction sn-glycerol 3-phosphate + an acyl-CoA = a 1-acyl-sn-glycero-3-phosphate + CoA. It carries out the reaction a 1-acyl-sn-glycero-3-phosphate + an acyl-CoA = a 1,2-diacyl-sn-glycero-3-phosphate + CoA. It participates in glycerolipid metabolism; triacylglycerol biosynthesis. The protein operates within phospholipid metabolism; CDP-diacylglycerol biosynthesis; CDP-diacylglycerol from sn-glycerol 3-phosphate: step 1/3. May transfer the acyl-group from acyl-coA to the sn-1 position of glycerol-3-phosphate, an essential step in glycerolipid biosynthesis. Also transfers the acyl-group from acyl-coA to the sn-2 position of 1-acyl-sn-glycerol-3-phosphate (lysophosphatidic acid, or LPA), forming 1,2-diacyl-sn-glycerol-3-phosphate (phosphatidic acid, or PA). This chain is Glycerol-3-phosphate acyltransferase 3-like (agpat9l), found in Danio rerio (Zebrafish).